The chain runs to 283 residues: UPF0276 protein Anae109_1558 (283 aa).

This sequence belongs to the UPF0276 family.

The polypeptide is UPF0276 protein Anae109_1558 (Anaeromyxobacter sp. (strain Fw109-5)).